The chain runs to 314 residues: NF-kappa-B inhibitor alpha (314 aa).

The interval 1-39 is disordered; that stretch reads MFQPAGHGQDWAMEGPRDGLKKERLVDDRHDSGLDSMKD. A compositionally biased stretch (basic and acidic residues) spans 15-39; it reads GPRDGLKKERLVDDRHDSGLDSMKD. Lys21 participates in a covalent cross-link: Glycyl lysine isopeptide (Lys-Gly) (interchain with G-Cter in SUMO); alternate. Residue Lys21 forms a Glycyl lysine isopeptide (Lys-Gly) (interchain with G-Cter in ubiquitin); alternate linkage. Residue Lys22 forms a Glycyl lysine isopeptide (Lys-Gly) (interchain with G-Cter in ubiquitin) linkage. The Destruction motif signature appears at 30-36; that stretch reads HDSGLDS. Position 32 is a phosphoserine; by IKKA and IKKB (Ser32). Position 36 is a phosphoserine; by IKKA, IKKB, IKKE and TBK1 (Ser36). Tyr42 is modified (phosphotyrosine; by Tyr-kinases). A Nuclear export signal motif is present at residues 45-54; it reads MVKELREIRL. Residues 110–120 carry the Nuclear import signal motif; sequence LQQTPLHLAVI. 4 ANK repeats span residues 110 to 139, 143 to 172, 182 to 211, and 216 to 245; these read LQQTPLHLAVITNQPGIAEALLKAGCDPEL, RGNTPLHLACEQGCLASVAVLTQTCTPQHL, NGHTCLHLASIHGYLGIVEHLVTLGADVNA, and NGRTALHLAVDLQNPDLVSLLLKCGADVNR. 2 positions are modified to (3S)-3-hydroxyasparagine; by HIF1AN: Asn210 and Asn244. A phosphoserine; by CK2 mark is found at Ser283 and Ser288. Thr291 is modified (phosphothreonine; by CK2). Position 293 is a phosphoserine; by CK2 (Ser293). Thr296 bears the Phosphothreonine mark.

Belongs to the NF-kappa-B inhibitor family. As to quaternary structure, interacts with RELA; the interaction requires the nuclear import signal. Part of a 70-90 kDa complex at least consisting of CHUK, IKBKB, NFKBIA, RELA, ELP1 and MAP3K14. Interacts with NKIRAS1 and NKIRAS2. Interacts with RWDD3; the interaction enhances sumoylation. Interacts with PRMT2. Interacts with PRKACA in platelets; this interaction is disrupted by thrombin and collagen. Interacts with MEFV. Interacts with DDRGK1; positively regulates NFKBIA phosphorylation and degradation. Interacts with HNRNPA2B1; the interaction may be mediated by the RRM2 domain of HNRNPA2B1, and HNRNPA2B1 may interact simultaneously with FAM76B and either NFKBIA or NFKBIE to form a complex. Phosphorylated at Ser-32 and Ser-36 by IKKA/CHUK and IKKB/IKBKB; disables inhibition of NF-kappa-B DNA-binding activity. Phosphorylation at positions 32 and 36 is prerequisite to recognition by the SCF(FBXW11) and SCF(BTRC) complexes, leading to polyubiquitination and subsequent degradation. In terms of processing, polyubiquitinated at Lys-21 and/or Lys-22 following phosphorylation at Ser-32 and Ser-36. Monoubiquitinated at Lys-21 and/or Lys-22 by UBE2D3. Ubiquitin chain elongation is then performed by CDC34 in cooperation with the SCF(FBXW11) E3 ligase complex, building ubiquitin chains from the UBE2D3-primed NFKBIA-linked ubiquitin. The resulting polyubiquitination leads to protein degradation. Also ubiquitinated by the SCF(BTRC) complex following stimulus-dependent phosphorylation at Ser-32 and Ser-36. Deubiquitinated by USP38, leading to NF-kappa-B inhibition. Post-translationally, sumoylated; sumoylation requires the presence of the nuclear import signal. Sumoylation blocks ubiquitination and proteasome-mediated degradation of the protein thereby increasing the protein stability. Hydroxylated by HIF1AN.

The protein resides in the cytoplasm. Its subcellular location is the nucleus. Its function is as follows. Inhibits the activity of dimeric NF-kappa-B/REL complexes by trapping REL (RELA/p65 and NFKB1/p50) dimers in the cytoplasm by masking their nuclear localization signals. On cellular stimulation by immune and pro-inflammatory responses, becomes phosphorylated promoting ubiquitination and degradation, enabling the dimeric RELA to translocate to the nucleus and activate transcription. This is NF-kappa-B inhibitor alpha (Nfkbia) from Rattus norvegicus (Rat).